Here is a 551-residue protein sequence, read N- to C-terminus: Glucans biosynthesis protein D (551 aa).

Residues 1 to 32 constitute a signal peptide (tat-type signal); the sequence is MDRRRFIKGSMAMAAVCGTSGIASLFSQAAFA.

Belongs to the OpgD/OpgG family. Predicted to be exported by the Tat system. The position of the signal peptide cleavage has not been experimentally proven.

The protein localises to the periplasm. It participates in glycan metabolism; osmoregulated periplasmic glucan (OPG) biosynthesis. Functionally, probably involved in the control of the structural glucose backbone of osmoregulated periplasmic glucans (OPGs). This chain is Glucans biosynthesis protein D, found in Escherichia coli (strain K12 / MC4100 / BW2952).